We begin with the raw amino-acid sequence, 353 residues long: Photosystem II protein D1 (353 aa).

Thr2 is subject to N-acetylthreonine. Thr2 carries the phosphothreonine modification. The next 3 membrane-spanning stretches (helical) occupy residues 29–46 (YIGWFGVLMIPTLLTATS), 118–133 (HFLLGVACYMGREWEL), and 142–156 (WIAVAYSAPVAAATA). His118 is a binding site for chlorophyll a. A pheophytin a-binding site is contributed by Tyr126. Positions 170 and 189 each coordinate [CaMn4O5] cluster. The chain crosses the membrane as a helical span at residues 197–218 (FHMLGVAGVFGGSLFSAMHGSL). His198 contacts chlorophyll a. A quinone contacts are provided by residues His215 and 264 to 265 (SF). His215 contacts Fe cation. Residue His272 coordinates Fe cation. The chain crosses the membrane as a helical span at residues 274-288 (FLAAWPVVGIWFTAL). The [CaMn4O5] cluster site is built by His332, Glu333, Asp342, and Ala344. Residues 345–353 (SIEAPLVNG) constitute a propeptide that is removed on maturation.

Belongs to the reaction center PufL/M/PsbA/D family. In terms of assembly, PSII is composed of 1 copy each of membrane proteins PsbA, PsbB, PsbC, PsbD, PsbE, PsbF, PsbH, PsbI, PsbJ, PsbK, PsbL, PsbM, PsbT, PsbX, PsbY, PsbZ, Psb30/Ycf12, at least 3 peripheral proteins of the oxygen-evolving complex and a large number of cofactors. It forms dimeric complexes. The D1/D2 heterodimer binds P680, chlorophylls that are the primary electron donor of PSII, and subsequent electron acceptors. It shares a non-heme iron and each subunit binds pheophytin, quinone, additional chlorophylls, carotenoids and lipids. D1 provides most of the ligands for the Mn4-Ca-O5 cluster of the oxygen-evolving complex (OEC). There is also a Cl(-1) ion associated with D1 and D2, which is required for oxygen evolution. The PSII complex binds additional chlorophylls, carotenoids and specific lipids. serves as cofactor. In terms of processing, tyr-161 forms a radical intermediate that is referred to as redox-active TyrZ, YZ or Y-Z. Post-translationally, C-terminally processed by CTPA; processing is essential to allow assembly of the oxygen-evolving complex and thus photosynthetic growth.

The protein resides in the plastid. The protein localises to the chloroplast thylakoid membrane. It carries out the reaction 2 a plastoquinone + 4 hnu + 2 H2O = 2 a plastoquinol + O2. Its function is as follows. Photosystem II (PSII) is a light-driven water:plastoquinone oxidoreductase that uses light energy to abstract electrons from H(2)O, generating O(2) and a proton gradient subsequently used for ATP formation. It consists of a core antenna complex that captures photons, and an electron transfer chain that converts photonic excitation into a charge separation. The D1/D2 (PsbA/PsbD) reaction center heterodimer binds P680, the primary electron donor of PSII as well as several subsequent electron acceptors. This is Photosystem II protein D1 from Psilotum nudum (Whisk fern).